The primary structure comprises 398 residues: Growth-regulating factor 3 (398 aa).

Residues 1–17 are compositionally biased toward low complexity; the sequence is MDLQLKQWRSQQQQQHQ. Residues 1–32 are disordered; it reads MDLQLKQWRSQQQQQHQTESEEQPSAAKIPKH. The region spanning 76–111 is the QLQ domain; it reads FFSWAQWQELELQALIYRYMLAGAAVPQELLLPIKK. A WRC domain is found at 144-188; that stretch reads DPEPGRCRRTDGKKWRCSRDVFAGHKYCERHMHRGRNRSRKPVET. Short sequence motifs (bipartite nuclear localization signal) lie at residues 149–159 and 177–184; these read RCRRTDGKKWR and RGRNRSRK. Polar residues-rich tracts occupy residues 299–350 and 383–398; these read SLQE…RDQQ and PTSV…QAFH. The segment at 299-398 is disordered; that stretch reads SLQEADNSSS…QLGVSTQAFH (100 aa).

This sequence belongs to the GRF family. In terms of tissue distribution, strongly expressed in actively growing and developing tissues, such as roots, upper stems, and shoot tips containing the shoot apical meristem (SAM) and flower buds. Also expressed in mature flowers, but weakly expressed in mature stems and leaves.

The protein localises to the nucleus. Functionally, transcription activator that plays a role in the regulation of cell expansion in leaf and cotyledons tissues. Component of a network formed by miR396, the GRFs and their interacting factors (GIFs) acting in the regulation of meristem function, at least partially through the control of cell proliferation. microRNA396-GRF1/GRF3 regulatory module acts as a developmental regulator in the reprogramming of root cells during cyst nematode infection, leading to the formation of the syncytium. The polypeptide is Growth-regulating factor 3 (GRF3) (Arabidopsis thaliana (Mouse-ear cress)).